The sequence spans 276 residues: NAD(+)--protein-threonine ADP-ribosyltransferase (276 aa).

As to quaternary structure, interacts directly with host ubiquitin.

The protein localises to the secreted. Its subcellular location is the host cell. It carries out the reaction L-threonyl-[protein] + NAD(+) = O-(ADP-D-ribosyl)-L-threonyl-[protein] + nicotinamide + H(+). Functionally, ADP-ribosyltransferase that specifically modifies host ubiquitin on 'Thr-66' residue, which causes the shutdown of polyubiquitin synthesis and disrupts the recognition and reversal of polyubiquitin in host cells during infection. Threonine ADP-ribosylation of ubiquitin prevents the transfer of ubiquitin from ubiquitin-activating enzyme E1 to ubiquitin-conjugating enzyme E2, which inhibits subsequent ubiquitin activation and leads to the shutdown of polyubiquitin synthesis in host cells. The modification also causes dysfunction of polyubiquitin chains in cells, thereby blocking host ubiquitin signaling. ADP-ribosylation by CteC is likely irreversible. Plays a crucial role in bacterial colonization in mice during infection. This Chromobacterium violaceum (strain ATCC 12472 / DSM 30191 / JCM 1249 / CCUG 213 / NBRC 12614 / NCIMB 9131 / NCTC 9757 / MK) protein is NAD(+)--protein-threonine ADP-ribosyltransferase.